The primary structure comprises 395 residues: ATP synthase subunit beta, chloroplastic (395 aa).

An ATP-binding site is contributed by 72–79 (GGAGVGKT).

The protein belongs to the ATPase alpha/beta chains family. As to quaternary structure, F-type ATPases have 2 components, CF(1) - the catalytic core - and CF(0) - the membrane proton channel. CF(1) has five subunits: alpha(3), beta(3), gamma(1), delta(1), epsilon(1). CF(0) has four main subunits: a(1), b(1), b'(1) and c(9-12).

Its subcellular location is the plastid. The protein localises to the chloroplast thylakoid membrane. It catalyses the reaction ATP + H2O + 4 H(+)(in) = ADP + phosphate + 5 H(+)(out). Functionally, produces ATP from ADP in the presence of a proton gradient across the membrane. The catalytic sites are hosted primarily by the beta subunits. This Blechnum occidentale (Hammock fern) protein is ATP synthase subunit beta, chloroplastic.